The chain runs to 343 residues: NAD-dependent deacetylase sir2E (343 aa).

The 274-residue stretch at 27 to 300 (YLKNKKEFEF…PLLERQLLYE (274 aa)) folds into the Deacetylase sirtuin-type domain. H152 acts as the Proton acceptor in catalysis. Residues C160, C165, C200, and C203 each coordinate Zn(2+).

It belongs to the sirtuin family.

The protein localises to the nucleus. The enzyme catalyses N(6)-acetyl-L-lysyl-[protein] + NAD(+) + H2O = 2''-O-acetyl-ADP-D-ribose + nicotinamide + L-lysyl-[protein]. NAD-dependent deacetylase, which plays an important role in the regulation of transcriptional repression. May play a role in cell cycle. When overexpressed, the cell cycle is accelerated. This Dictyostelium discoideum (Social amoeba) protein is NAD-dependent deacetylase sir2E (sir2E).